Reading from the N-terminus, the 166-residue chain is Phospholipase A2 inhibitor B1 (166 aa).

The signal sequence occupies residues 1–19; that stretch reads MRLILLSGLLLLGTFLVNG. Residues 46–161 enclose the C-type lectin domain; sequence LFHAFLTVHK…CDDNLLVVCE (116 aa). Disulfide bonds link Cys83/Cys160 and Cys138/Cys152. The N-linked (GlcNAc...) asparagine glycan is linked to Asn122.

The protein belongs to the alpha-type phospholipase A2 inhibitor family. Homotrimer; non-covalently linked. In terms of tissue distribution, expressed by the liver.

It localises to the secreted. Its function is as follows. This phospholipase A2 inhibitor binds directly phospholipase A2 in the presence or absence of calcium. The chain is Phospholipase A2 inhibitor B1 from Crotalus durissus terrificus (South American rattlesnake).